A 91-amino-acid polypeptide reads, in one-letter code: UPF0250 protein Psyr_4360 (91 aa).

It belongs to the UPF0250 family.

The sequence is that of UPF0250 protein Psyr_4360 from Pseudomonas syringae pv. syringae (strain B728a).